A 165-amino-acid polypeptide reads, in one-letter code: Shikimate kinase (165 aa).

11–16 (GAGKTT) contacts ATP. Residue threonine 15 participates in Mg(2+) binding. Aspartate 33, arginine 57, and glycine 78 together coordinate substrate. ATP is bound at residue arginine 116. Arginine 134 is a binding site for substrate.

The protein belongs to the shikimate kinase family. In terms of assembly, monomer. The cofactor is Mg(2+).

The protein resides in the cytoplasm. The enzyme catalyses shikimate + ATP = 3-phosphoshikimate + ADP + H(+). Its pathway is metabolic intermediate biosynthesis; chorismate biosynthesis; chorismate from D-erythrose 4-phosphate and phosphoenolpyruvate: step 5/7. In terms of biological role, catalyzes the specific phosphorylation of the 3-hydroxyl group of shikimic acid using ATP as a cosubstrate. This is Shikimate kinase from Bacillus cereus (strain G9842).